The sequence spans 312 residues: 4-hydroxy-3-methylbut-2-enyl diphosphate reductase (312 aa).

Cys15 is a binding site for [4Fe-4S] cluster. (2E)-4-hydroxy-3-methylbut-2-enyl diphosphate contacts are provided by His44 and His77. Dimethylallyl diphosphate is bound by residues His44 and His77. Isopentenyl diphosphate contacts are provided by His44 and His77. Cys99 contributes to the [4Fe-4S] cluster binding site. His127 serves as a coordination point for (2E)-4-hydroxy-3-methylbut-2-enyl diphosphate. His127 contributes to the dimethylallyl diphosphate binding site. Isopentenyl diphosphate is bound at residue His127. Residue Glu129 is the Proton donor of the active site. Thr167 lines the (2E)-4-hydroxy-3-methylbut-2-enyl diphosphate pocket. Residue Cys197 coordinates [4Fe-4S] cluster. Residues Ser225, Ser226, Asn227, and Ser269 each contribute to the (2E)-4-hydroxy-3-methylbut-2-enyl diphosphate site. The dimethylallyl diphosphate site is built by Ser225, Ser226, Asn227, and Ser269. Residues Ser225, Ser226, Asn227, and Ser269 each contribute to the isopentenyl diphosphate site.

This sequence belongs to the IspH family. It depends on [4Fe-4S] cluster as a cofactor.

It catalyses the reaction isopentenyl diphosphate + 2 oxidized [2Fe-2S]-[ferredoxin] + H2O = (2E)-4-hydroxy-3-methylbut-2-enyl diphosphate + 2 reduced [2Fe-2S]-[ferredoxin] + 2 H(+). It carries out the reaction dimethylallyl diphosphate + 2 oxidized [2Fe-2S]-[ferredoxin] + H2O = (2E)-4-hydroxy-3-methylbut-2-enyl diphosphate + 2 reduced [2Fe-2S]-[ferredoxin] + 2 H(+). It participates in isoprenoid biosynthesis; dimethylallyl diphosphate biosynthesis; dimethylallyl diphosphate from (2E)-4-hydroxy-3-methylbutenyl diphosphate: step 1/1. The protein operates within isoprenoid biosynthesis; isopentenyl diphosphate biosynthesis via DXP pathway; isopentenyl diphosphate from 1-deoxy-D-xylulose 5-phosphate: step 6/6. Its function is as follows. Catalyzes the conversion of 1-hydroxy-2-methyl-2-(E)-butenyl 4-diphosphate (HMBPP) into a mixture of isopentenyl diphosphate (IPP) and dimethylallyl diphosphate (DMAPP). Acts in the terminal step of the DOXP/MEP pathway for isoprenoid precursor biosynthesis. This Aromatoleum aromaticum (strain DSM 19018 / LMG 30748 / EbN1) (Azoarcus sp. (strain EbN1)) protein is 4-hydroxy-3-methylbut-2-enyl diphosphate reductase.